Consider the following 100-residue polypeptide: NADH-quinone oxidoreductase subunit K (100 aa).

3 consecutive transmembrane segments (helical) span residues 4 to 24 (LQHG…GLVI), 28 to 48 (LLFM…AFVV), and 60 to 80 (VMYI…LALL).

This sequence belongs to the complex I subunit 4L family. In terms of assembly, NDH-1 is composed of 13 different subunits. Subunits NuoA, H, J, K, L, M, N constitute the membrane sector of the complex.

It localises to the cell inner membrane. It carries out the reaction a quinone + NADH + 5 H(+)(in) = a quinol + NAD(+) + 4 H(+)(out). Its function is as follows. NDH-1 shuttles electrons from NADH, via FMN and iron-sulfur (Fe-S) centers, to quinones in the respiratory chain. The immediate electron acceptor for the enzyme in this species is believed to be ubiquinone. Couples the redox reaction to proton translocation (for every two electrons transferred, four hydrogen ions are translocated across the cytoplasmic membrane), and thus conserves the redox energy in a proton gradient. The polypeptide is NADH-quinone oxidoreductase subunit K (Musicola paradisiaca (strain Ech703) (Dickeya paradisiaca)).